Reading from the N-terminus, the 820-residue chain is Cation/H(+) antiporter 17 (820 aa).

Transmembrane regions (helical) follow at residues 30-50, 58-75, 90-110, 124-144, 159-179, 192-212, 222-242, 276-296, 313-333, 342-362, 374-394, and 404-424; these read LPLL…LAFL, RVIA…SALG, LTVL…LVGL, ALSI…GTSF, FLVF…ARIL, IALS…ALAV, LTSL…IFVV, FVTD…GVIF, LVSG…TNVA, GLLV…TVLV, LALG…LNIG, and IFAI…PLVL. Phosphoserine occurs at positions 817 and 819.

The protein belongs to the monovalent cation:proton antiporter 2 (CPA2) transporter (TC 2.A.37) family. CHX (TC 2.A.37.4) subfamily. As to expression, predominantly expressed in epidermal and cortical cells of mature roots but also barely detected in leaves.

The protein localises to the membrane. Functionally, operates as a K(+)/H(+) antiporter that controls K(+) acquisition and homeostasis. This Arabidopsis thaliana (Mouse-ear cress) protein is Cation/H(+) antiporter 17 (CHX17).